The sequence spans 396 residues: 3-amino-4-hydroxybenzoic acid synthase (396 aa).

Positions 1 to 29 (MSSSPSPSPSSSSSSSASSSASSSPSSSS) are disordered.

Belongs to the archaeal-type DHQ synthase family. GriH subfamily. Monomer. The cofactor is Mn(2+).

It carries out the reaction 2-amino-4,5-dihydroxy-6-oxo-7-(phosphooxy)heptanoate = 3-amino-4-hydroxybenzoate + phosphate + 2 H2O + H(+). Catalyzes the cyclization of 2-amino-4,5-dihydroxy-6-one-heptanoic acid-7-phosphate to yield 3-amino-4-hydroxybenzoic acid (3,4-AHBA). The chain is 3-amino-4-hydroxybenzoic acid synthase (griH) from Streptomyces griseus subsp. griseus (strain JCM 4626 / CBS 651.72 / NBRC 13350 / KCC S-0626 / ISP 5235).